Consider the following 247-residue polypeptide: NH(3)-dependent NAD(+) synthetase (247 aa).

29-36 (GLSGGVDS) is a binding site for ATP. Asp-35 contacts Mg(2+). Arg-112 provides a ligand contact to deamido-NAD(+). Residue Thr-132 coordinates ATP. Glu-137 lines the Mg(2+) pocket. Positions 145 and 152 each coordinate deamido-NAD(+). ATP contacts are provided by Lys-161 and Ser-183. 233–234 (HK) is a deamido-NAD(+) binding site.

It belongs to the NAD synthetase family. In terms of assembly, homodimer.

It carries out the reaction deamido-NAD(+) + NH4(+) + ATP = AMP + diphosphate + NAD(+) + H(+). It participates in cofactor biosynthesis; NAD(+) biosynthesis; NAD(+) from deamido-NAD(+) (ammonia route): step 1/1. Functionally, catalyzes the ATP-dependent amidation of deamido-NAD to form NAD. Uses ammonia as a nitrogen source. The chain is NH(3)-dependent NAD(+) synthetase from Archaeoglobus fulgidus (strain ATCC 49558 / DSM 4304 / JCM 9628 / NBRC 100126 / VC-16).